We begin with the raw amino-acid sequence, 461 residues long: Toxin CfTX-B (461 aa).

Positions 1-24 (MDPRISSRLRALALLVFVISITDG) are cleaved as a signal peptide. The propeptide occupies 25–31 (IPNRAKR).

The protein belongs to the jellyfish toxin family. Type II subfamily. As to quaternary structure, oligomer. Contains 2 disulfide bonds. In terms of tissue distribution, nematocytes.

It is found in the secreted. The protein resides in the nematocyst. Its subcellular location is the target cell membrane. Functionally, the fraction containing this toxin and CfTX-B shows potent hemolytic activity. This fraction causes minor effects on the cardiovascular system of anesthetized rats (at 25 ug/kg), since it has no significant effects on heart rate but produces relatively small increases in mean arterial pressure. This Chironex fleckeri (Australian box jellyfish) protein is Toxin CfTX-B.